The primary structure comprises 415 residues: Carboxypeptidase G2 (415 aa).

A signal peptide spans 1–22 (MRPSIHRTAIAAVLATAFVAGT). His112 contributes to the Zn(2+) binding site. Asp114 is an active-site residue. Zn(2+) is bound at residue Asp141. Residue Glu175 is the Proton acceptor of the active site. Zn(2+) is bound by residues Glu176, Glu200, and His385.

It belongs to the peptidase M20A family. In terms of assembly, homodimer. Zn(2+) serves as cofactor.

The enzyme catalyses Release of C-terminal glutamate residues from a wide range of N-acylating moieties, including peptidyl, aminoacyl, benzoyl, benzyloxycarbonyl, folyl and pteroyl groups.. In terms of biological role, catalyzes the hydrolysis of reduced and non-reduced folates to pteroates and L-glutamate. This enzyme has a broad specificity. This chain is Carboxypeptidase G2 (cpg2), found in Pseudomonas sp. (strain RS-16).